The primary structure comprises 341 residues: Transcription factor JunD (341 aa).

The disordered stretch occupies residues 21–49 (VAGAAGAPGGGGFAPPGRAFPGAPPTSSM). The Menin-binding motif (MBM) motif lies at 35–47 (PPGRAFPGAPPTS). The MAP kinase docking motif; essential for its phosphorylation motif lies at 51 to 60 (KKDALTLSLA). The segment at 65 to 85 (AGLKPGSATAPSALRPDGAPD) is disordered. Position 90 is a phosphoserine (Ser-90). Ser-100 bears the Phosphoserine; by MAPK8 mark. Position 117 is a phosphothreonine (Thr-117). Residues 155-176 (AATAATSGAPAPPAPADLAATP) are disordered. Phosphoserine is present on residues Ser-245, Ser-249, and Ser-253. A basic motif region spans residues 262 to 289 (RIKAERKRLRNRIAASKCRKRKLERISR). Residues 262-325 (RIKAERKRLR…AQLKQKVLSH (64 aa)) enclose the bZIP domain. The leucine-zipper stretch occupies residues 290-318 (LEEKVKTLKSQNTELASTASLLREQVAQL).

Belongs to the bZIP family. Jun subfamily. Heterodimer; binds DNA as a heterodimer. Component of an AP-1 transcription factor complex composed of JUN-FOS heterodimers. As part of the AP-1 transcription factor complex, forms heterodimers with FOS proteins, thereby binding to the AP-1 consensus sequence and stimulating transcription. Forms heterodimers with FOSB; thereby binding to the AP-1 consensus sequence. Interacts (via MBM motif) with MEN1; this interaction represses transcriptional activation. Interacts with MAPK10; this interaction is inhibited in the presence of MEN1. In terms of processing, phosphorylated by MAP kinases MAPK8 and MAPK10; phosphorylation is inhibited in the presence of MEN1.

It localises to the nucleus. Its function is as follows. Transcription factor binding AP-1 sites. Heterodimerizes with proteins of the FOS family to form an AP-1 transcription factor complex, thereby enhancing their DNA binding activity to an AP-1 consensus sequence 3'-TGA[GC]TCA-5' and enhancing their transcriptional activity. This Rattus norvegicus (Rat) protein is Transcription factor JunD (Jund).